The sequence spans 391 residues: Inositol-tetrakisphosphate 1-kinase 2 (391 aa).

Residues K90 and K132 each contribute to the 1D-myo-inositol 1,3,4-trisphosphate site. 2 residues coordinate ATP: R167 and K217. The ATP-grasp domain maps to 178-384 (KLSDCSGSLF…FFQNLAQVKY (207 aa)). Positions 228 and 260 each coordinate 1D-myo-inositol 1,3,4-trisphosphate. ATP contacts are provided by residues 249 to 260 (QEFVNHGGVMFK) and S275. Positions 340, 355, and 357 each coordinate Mg(2+). N357 contacts 1D-myo-inositol 1,3,4-trisphosphate.

Belongs to the ITPK1 family. Monomer. It depends on Mg(2+) as a cofactor. As to expression, expressed in seedling roots, cotyledons, rosette leaves, cauline leaves, stems, flowers, siliques and seeds.

The enzyme catalyses 1D-myo-inositol 3,4,5,6-tetrakisphosphate + ATP = 1D-myo-inositol 1,3,4,5,6-pentakisphosphate + ADP + H(+). It catalyses the reaction 1D-myo-inositol 1,3,4-trisphosphate + ATP = 1D-myo-inositol 1,3,4,5-tetrakisphosphate + ADP + H(+). The catalysed reaction is 1D-myo-inositol 1,3,4-trisphosphate + ATP = 1D-myo-inositol 1,3,4,6-tetrakisphosphate + ADP + H(+). Kinase that can phosphorylate various inositol polyphosphate such as Ins(3,4,5,6)P4 or Ins(1,3,4)P3. Phosphorylates Ins(3,4,5,6)P4 to form InsP5. This reaction is thought to have regulatory importance, since Ins(3,4,5,6)P4 is an inhibitor of plasma membrane Ca(2+)-activated Cl(-) channels, while Ins(1,3,4,5,6)P5 is not. Also phosphorylates Ins(1,3,4)P3 or a racemic mixture of Ins(1,4,6)P3 and Ins(3,4,6)P3 to form InsP4. Ins(1,3,4,6)P4 is an essential molecule in the hexakisphosphate (InsP6) pathway. Plays a role in seed coat development and lipid polyester barrier formation. The chain is Inositol-tetrakisphosphate 1-kinase 2 (ITPK2) from Arabidopsis thaliana (Mouse-ear cress).